A 104-amino-acid polypeptide reads, in one-letter code: Large ribosomal subunit protein bL21 (104 aa).

This sequence belongs to the bacterial ribosomal protein bL21 family. As to quaternary structure, part of the 50S ribosomal subunit. Contacts protein L20.

Its function is as follows. This protein binds to 23S rRNA in the presence of protein L20. This Helicobacter hepaticus (strain ATCC 51449 / 3B1) protein is Large ribosomal subunit protein bL21.